Here is a 159-residue protein sequence, read N- to C-terminus: MSGAGAPVSPQLNAKGLELVIIAASWHEKVMNGLLDGALRAARDAGIEEPRIVRVPGSFELPVAAARLAPDYDAVVALGVVIRGGTPHFEYVCQAATSGLTEVSVRTGVPVGFGLLTCDNDQQALDRAGLPAAPGFAGSKEDKGYEATSAALETALTLR.

Residues Trp26, 58-60 (SFE), and 80-82 (VVI) contribute to the 5-amino-6-(D-ribitylamino)uracil site. (2S)-2-hydroxy-3-oxobutyl phosphate is bound at residue 85–86 (GT). The active-site Proton donor is the His88. Residue Phe113 participates in 5-amino-6-(D-ribitylamino)uracil binding. Arg127 lines the (2S)-2-hydroxy-3-oxobutyl phosphate pocket.

This sequence belongs to the DMRL synthase family.

The catalysed reaction is (2S)-2-hydroxy-3-oxobutyl phosphate + 5-amino-6-(D-ribitylamino)uracil = 6,7-dimethyl-8-(1-D-ribityl)lumazine + phosphate + 2 H2O + H(+). The protein operates within cofactor biosynthesis; riboflavin biosynthesis; riboflavin from 2-hydroxy-3-oxobutyl phosphate and 5-amino-6-(D-ribitylamino)uracil: step 1/2. In terms of biological role, catalyzes the formation of 6,7-dimethyl-8-ribityllumazine by condensation of 5-amino-6-(D-ribitylamino)uracil with 3,4-dihydroxy-2-butanone 4-phosphate. This is the penultimate step in the biosynthesis of riboflavin. This is 6,7-dimethyl-8-ribityllumazine synthase from Renibacterium salmoninarum (strain ATCC 33209 / DSM 20767 / JCM 11484 / NBRC 15589 / NCIMB 2235).